We begin with the raw amino-acid sequence, 314 residues long: Three-prime repair exonuclease 1 (314 aa).

Asp18 and Glu20 together coordinate Mg(2+). Position 20–21 (20–21 (EA)) interacts with substrate. Ser78 bears the Phosphoserine mark. Tyr129 is a binding site for substrate. The residue at position 167 (Ser167) is a Phosphoserine. Catalysis depends on His195, which acts as the Proton donor/acceptor. Asp200 lines the Mg(2+) pocket. Asp200 contributes to the substrate binding site. The interval 236–314 (TASARTKPRP…YGLSLATPGE (79 aa)) is necessary for endoplasmic reticulum localization. A disordered region spans residues 240-278 (RTKPRPSAVTTTAHLATTRNTSPSLGESRGTKDLPPVKD). The interaction with UBQLN1 stretch occupies residues 243-314 (PRPSAVTTTA…YGLSLATPGE (72 aa)). Residues 247–260 (AVTTTAHLATTRNT) show a composition bias toward low complexity. Position 261 is a phosphoserine (Ser261). A necessary for cytoplasmic retention region spans residues 281 to 314 (ALSREGLLAPLGLLAILTLAVATLYGLSLATPGE).

Belongs to the exonuclease superfamily. TREX family. Homodimer. Interacts (via proline-rich region) with TCERG1/CA150 (via the second WW domain). Component of the SET complex, composed of at least ANP32A, APEX1, HMGB2, NME1, SET and TREX1. Within this complex, directly interacts with SET; this interaction does not result in TREX1 inhibition. Also interacts with NME1, but only following translocation to the nucleus. Directly interacts with UBQLN1 (via ubiquitin-like domain); the interaction may control TREX1 subcellular location. It depends on Mg(2+) as a cofactor. Ubiquitinated, but not targeted to proteasomal degradation. Ubiquitination may be important for interaction with UBQLN1. In terms of tissue distribution, detected in thymus, spleen, liver, brain, heart, small intestine and colon.

It localises to the nucleus. The protein localises to the cytoplasm. The protein resides in the cytosol. It is found in the endoplasmic reticulum membrane. The catalysed reaction is Exonucleolytic cleavage in the 3'- to 5'-direction to yield nucleoside 5'-phosphates.. In terms of biological role, major cellular 3'-to-5' DNA exonuclease which digests single-stranded DNA (ssDNA) and double-stranded DNA (dsDNA) with mismatched 3' termini. Prevents cell-intrinsic initiation of autoimmunity. Acts by metabolizing DNA fragments from endogenous retroelements, including L1, LTR and SINE elements. Plays a key role in degradation of DNA fragments at cytosolic micronuclei arising from genome instability: its association with the endoplasmic reticulum membrane directs TREX1 to ruptured micronuclei, leading to micronuclear DNA degradation. Micronuclear DNA degradation is required to limit CGAS activation and subsequent inflammation. Unless degraded, these DNA fragments accumulate in the cytosol and activate the cGAS-STING innate immune signaling, leading to the production of type I interferon. Prevents chronic ATM-dependent checkpoint activation, by processing ssDNA polynucleotide species arising from the processing of aberrant DNA replication intermediates. Inefficiently degrades oxidized DNA, such as that generated upon antimicrobial reactive oxygen production or upon absorption of UV light. During GZMA-mediated cell death, contributes to DNA damage in concert with NME1. NME1 nicks one strand of DNA and TREX1 removes bases from the free 3' end to enhance DNA damage and prevent DNA end reannealing and rapid repair. This Homo sapiens (Human) protein is Three-prime repair exonuclease 1.